The following is a 290-amino-acid chain: Probable protein phosphatase 2C 20 (290 aa).

One can recognise a PPM-type phosphatase domain in the interval Ala-31–Phe-278. Mn(2+) is bound by residues Asp-68, Gly-69, Asp-230, and Asp-269.

The protein belongs to the PP2C family. Mg(2+) is required as a cofactor. Requires Mn(2+) as cofactor.

It carries out the reaction O-phospho-L-seryl-[protein] + H2O = L-seryl-[protein] + phosphate. The enzyme catalyses O-phospho-L-threonyl-[protein] + H2O = L-threonyl-[protein] + phosphate. Functionally, may be involved in defense signaling. This Arabidopsis thaliana (Mouse-ear cress) protein is Probable protein phosphatase 2C 20 (PPC3-1.2).